Here is a 505-residue protein sequence, read N- to C-terminus: 2,3-bisphosphoglycerate-independent phosphoglycerate mutase (505 aa).

Mn(2+) contacts are provided by Asp11 and Ser61. Ser61 (phosphoserine intermediate) is an active-site residue. Substrate is bound by residues His122, 152–153 (RD), Arg184, Arg190, 258–261 (RPDR), and Lys331. Asp396, His400, Asp437, His438, and His455 together coordinate Mn(2+).

The protein belongs to the BPG-independent phosphoglycerate mutase family. Monomer. Mn(2+) is required as a cofactor.

It catalyses the reaction (2R)-2-phosphoglycerate = (2R)-3-phosphoglycerate. Its pathway is carbohydrate degradation; glycolysis; pyruvate from D-glyceraldehyde 3-phosphate: step 3/5. Its function is as follows. Catalyzes the interconversion of 2-phosphoglycerate and 3-phosphoglycerate. The polypeptide is 2,3-bisphosphoglycerate-independent phosphoglycerate mutase (Mesomycoplasma hyopneumoniae (strain 7448) (Mycoplasma hyopneumoniae)).